Consider the following 317-residue polypeptide: Glutaminase (317 aa).

Residues serine 67, asparagine 118, glutamate 162, asparagine 169, tyrosine 193, tyrosine 245, and valine 263 each contribute to the substrate site.

The protein belongs to the glutaminase family. Homotetramer.

It catalyses the reaction L-glutamine + H2O = L-glutamate + NH4(+). The protein is Glutaminase of Brucella abortus (strain S19).